The primary structure comprises 322 residues: Acetyl-coenzyme A carboxylase carboxyl transferase subunit beta (322 aa).

Positions 24 to 293 (LWIKCPDTGQ…PAVEEPAVVD (270 aa)) constitute a CoA carboxyltransferase N-terminal domain.

It belongs to the AccD/PCCB family. As to quaternary structure, acetyl-CoA carboxylase is a heterohexamer composed of biotin carboxyl carrier protein (AccB), biotin carboxylase (AccC) and two subunits each of ACCase subunit alpha (AccA) and ACCase subunit beta (AccD).

The protein localises to the cytoplasm. The enzyme catalyses N(6)-carboxybiotinyl-L-lysyl-[protein] + acetyl-CoA = N(6)-biotinyl-L-lysyl-[protein] + malonyl-CoA. It participates in lipid metabolism; malonyl-CoA biosynthesis; malonyl-CoA from acetyl-CoA: step 1/1. In terms of biological role, component of the acetyl coenzyme A carboxylase (ACC) complex. Biotin carboxylase (BC) catalyzes the carboxylation of biotin on its carrier protein (BCCP) and then the CO(2) group is transferred by the transcarboxylase to acetyl-CoA to form malonyl-CoA. The sequence is that of Acetyl-coenzyme A carboxylase carboxyl transferase subunit beta from Rhodopseudomonas palustris (strain HaA2).